The primary structure comprises 154 residues: Protein X (154 aa).

The interval 68-117 (PCALRFTSARRMETTVNAPQSLPTTLHKRTLGLSPRSTTWIEEYIKDCVF) is mitochondrial targeting sequence.

The protein belongs to the orthohepadnavirus protein X family. As to quaternary structure, may form homodimer. May interact with host CEBPA, CFLAR, CREB1, DDB1, E4F1, HBXIP, HSPD1/HSP60, NFKBIA, POLR2E and SMAD4. Interacts with host SMC5-SMC6 complex and induces its degradation. Interacts with host TRPC4AP; leading to prevent ubiquitination of TRPC4AP. Interacts with host PLSCR1; this interaction promotes ubiquitination and degradation of HBx and impairs HBx-mediated cell proliferation. In terms of processing, a fraction may be phosphorylated in insect cells and HepG2 cells, a human hepatoblastoma cell line. Phosphorylated in vitro by host protein kinase C or mitogen-activated protein kinase. N-acetylated in insect cells.

The protein localises to the host cytoplasm. It localises to the host nucleus. It is found in the host mitochondrion. Multifunctional protein that plays a role in silencing host antiviral defenses and promoting viral transcription. Does not seem to be essential for HBV infection. May be directly involved in development of cirrhosis and liver cancer (hepatocellular carcinoma). Most of cytosolic activities involve modulation of cytosolic calcium. The effect on apoptosis is controversial depending on the cell types in which the studies have been conducted. May induce apoptosis by localizing in mitochondria and causing loss of mitochondrial membrane potential. May also modulate apoptosis by binding host CFLAR, a key regulator of the death-inducing signaling complex (DISC). Promotes viral transcription by using the host E3 ubiquitin ligase DDB1 to target the SMC5-SMC6 complex to proteasomal degradation. This host complex would otherwise bind to viral episomal DNA, and prevents its transcription. Moderately stimulates transcription of many different viral and cellular transcription elements. Promoters and enhancers stimulated by HBx contain DNA binding sites for NF-kappa-B, AP-1, AP-2, c-EBP, ATF/CREB, or the calcium-activated factor NF-AT. The chain is Protein X from Hepatitis B virus genotype H subtype adw4 (isolate Nicaragua/2928Nic/1997) (HBV-H).